The primary structure comprises 540 residues: CTP synthase (540 aa).

Positions 1–267 (MTKYIFVTGG…DQKVCDFLHL (267 aa)) are amidoligase domain. Serine 13 serves as a coordination point for CTP. Serine 13 serves as a coordination point for UTP. An ATP-binding site is contributed by 14 to 19 (SLGKGI). Residue tyrosine 54 coordinates L-glutamine. Aspartate 71 is an ATP binding site. Mg(2+) is bound by residues aspartate 71 and glutamate 141. CTP-binding positions include 148–150 (DIE), 188–193 (KTKPTQ), and lysine 224. Residues 188–193 (KTKPTQ) and lysine 224 contribute to the UTP site. The 244-residue stretch at 294–537 (TITLVGKYVE…IGAASGLPAQ (244 aa)) folds into the Glutamine amidotransferase type-1 domain. Glycine 356 contributes to the L-glutamine binding site. Cysteine 383 (nucleophile; for glutamine hydrolysis) is an active-site residue. L-glutamine contacts are provided by residues 384 to 387 (LGMQ), glutamate 407, and arginine 465. Active-site residues include histidine 510 and glutamate 512.

It belongs to the CTP synthase family. In terms of assembly, homotetramer.

The enzyme catalyses UTP + L-glutamine + ATP + H2O = CTP + L-glutamate + ADP + phosphate + 2 H(+). It carries out the reaction L-glutamine + H2O = L-glutamate + NH4(+). The catalysed reaction is UTP + NH4(+) + ATP = CTP + ADP + phosphate + 2 H(+). Its pathway is pyrimidine metabolism; CTP biosynthesis via de novo pathway; CTP from UDP: step 2/2. Its activity is regulated as follows. Allosterically activated by GTP, when glutamine is the substrate; GTP has no effect on the reaction when ammonia is the substrate. The allosteric effector GTP functions by stabilizing the protein conformation that binds the tetrahedral intermediate(s) formed during glutamine hydrolysis. Inhibited by the product CTP, via allosteric rather than competitive inhibition. Its function is as follows. Catalyzes the ATP-dependent amination of UTP to CTP with either L-glutamine or ammonia as the source of nitrogen. Regulates intracellular CTP levels through interactions with the four ribonucleotide triphosphates. In Lactobacillus johnsonii (strain CNCM I-12250 / La1 / NCC 533), this protein is CTP synthase.